The chain runs to 137 residues: Ribonuclease kappa (137 aa).

The next 2 membrane-spanning stretches (helical) occupy residues 52 to 72 (ACGIVLSAWGVIMLIMLGIFF) and 104 to 124 (VSYNCFIAAGLYLLLGGFSFC).

Belongs to the RNase K family. In terms of assembly, interacts with the proton translocation complex V0 of the V-ATPase. Interacts with ATP6AP1. As to expression, widely expressed.

It is found in the endomembrane system. The protein localises to the cytoplasmic vesicle. The protein resides in the clathrin-coated vesicle membrane. Endoribonuclease which preferentially cleaves ApU and ApG phosphodiester bonds. Hydrolyzes UpU bonds at a lower rate. Regulates the activity of vacuolar (H+)-ATPase (V-ATPase) which is responsible for acidifying and maintaining the pH of intracellular compartments. Required at an early stage of receptor-mediated endocytosis. Its function is as follows. (Microbial infection) Required at an early stage of both clathrin-mediated and clathrin-independent endocytic uptake of a diverse set of viruses, including dengue, West Nile, Sindbis, Rift Valley Fever, influenza, and human rhinoviruses. In Homo sapiens (Human), this protein is Ribonuclease kappa (RNASEK).